A 983-amino-acid chain; its full sequence is Protein translocase subunit SecA (983 aa).

Residues Gln83, 101–105 (GEGKT), and Asp489 each bind ATP. The disordered stretch occupies residues 948–983 (ISSEEENNNEKTNININEDLERTKGEAQQTAKNPNE). Polar residues predominate over residues 973–983 (EAQQTAKNPNE).

Belongs to the SecA family. Monomer and homodimer. Part of the essential Sec protein translocation apparatus which comprises SecA, SecYEG and auxiliary proteins SecDF. Other proteins may also be involved.

Its subcellular location is the cell membrane. It is found in the cytoplasm. The catalysed reaction is ATP + H2O + cellular proteinSide 1 = ADP + phosphate + cellular proteinSide 2.. Its function is as follows. Part of the Sec protein translocase complex. Interacts with the SecYEG preprotein conducting channel. Has a central role in coupling the hydrolysis of ATP to the transfer of proteins into and across the cell membrane, serving as an ATP-driven molecular motor driving the stepwise translocation of polypeptide chains across the membrane. This chain is Protein translocase subunit SecA, found in Mesomycoplasma hyopneumoniae (strain 7448) (Mycoplasma hyopneumoniae).